A 938-amino-acid chain; its full sequence is Isoleucine--tRNA ligase (938 aa).

The 'HIGH' region motif lies at 58–68 (PYANGSIHIGH). E561 lines the L-isoleucyl-5'-AMP pocket. The 'KMSKS' region signature appears at 602–606 (KMSKS). K605 is a binding site for ATP. Residues C901, C904, C921, and C924 each coordinate Zn(2+).

It belongs to the class-I aminoacyl-tRNA synthetase family. IleS type 1 subfamily. As to quaternary structure, monomer. It depends on Zn(2+) as a cofactor.

The protein resides in the cytoplasm. It catalyses the reaction tRNA(Ile) + L-isoleucine + ATP = L-isoleucyl-tRNA(Ile) + AMP + diphosphate. Its function is as follows. Catalyzes the attachment of isoleucine to tRNA(Ile). As IleRS can inadvertently accommodate and process structurally similar amino acids such as valine, to avoid such errors it has two additional distinct tRNA(Ile)-dependent editing activities. One activity is designated as 'pretransfer' editing and involves the hydrolysis of activated Val-AMP. The other activity is designated 'posttransfer' editing and involves deacylation of mischarged Val-tRNA(Ile). The chain is Isoleucine--tRNA ligase from Serratia proteamaculans (strain 568).